The primary structure comprises 134 residues: Probable histone H2A.3 (134 aa).

Belongs to the histone H2A family. As to quaternary structure, the nucleosome is a histone octamer containing two molecules each of H2A, H2B, H3 and H4 assembled in one H3-H4 heterotetramer and two H2A-H2B heterodimers. The octamer wraps approximately 147 bp of DNA.

It localises to the nucleus. Its subcellular location is the chromosome. Functionally, core component of nucleosome. Nucleosomes wrap and compact DNA into chromatin, limiting DNA accessibility to the cellular machineries which require DNA as a template. Histones thereby play a central role in transcription regulation, DNA repair, DNA replication and chromosomal stability. DNA accessibility is regulated via a complex set of post-translational modifications of histones, also called histone code, and nucleosome remodeling. In Oryza sativa subsp. indica (Rice), this protein is Probable histone H2A.3.